The chain runs to 305 residues: uncharacterized protein (305 aa).

Residues Ile-8–Phe-28 traverse the membrane as a helical segment.

The protein localises to the membrane. This is an uncharacterized protein from Bacillus subtilis (strain 168).